Reading from the N-terminus, the 187-residue chain is MATTADFKNGLVLKNEGKLQQIIEFQHVKPGKGPAFVRTKLKDVVTGKTIDKTWNAGVKVETATVDRRDVTYLYNDGTSFIVMDDKTFEQYELSPDAFGDAGRFLLENMRVQVSFHEGEALFGELPVSVDLRVEHTDPGLQGDRSTGGTKPATLETGAEIQVPLFIETGNVLKVDTRDGSYLSRVNN.

It belongs to the elongation factor P family.

It is found in the cytoplasm. The protein operates within protein biosynthesis; polypeptide chain elongation. Functionally, involved in peptide bond synthesis. Stimulates efficient translation and peptide-bond synthesis on native or reconstituted 70S ribosomes in vitro. Probably functions indirectly by altering the affinity of the ribosome for aminoacyl-tRNA, thus increasing their reactivity as acceptors for peptidyl transferase. The sequence is that of Elongation factor P from Corynebacterium glutamicum (strain R).